A 74-amino-acid chain; its full sequence is RNA-binding protein Hfq (74 aa).

The Sm domain occupies 9-69 (DQFLNQLRKE…ISTFMPQKNV (61 aa)).

It belongs to the Hfq family. As to quaternary structure, homohexamer.

Its function is as follows. RNA chaperone that binds small regulatory RNA (sRNAs) and mRNAs to facilitate mRNA translational regulation in response to envelope stress, environmental stress and changes in metabolite concentrations. Also binds with high specificity to tRNAs. The polypeptide is RNA-binding protein Hfq (Bacillus cytotoxicus (strain DSM 22905 / CIP 110041 / 391-98 / NVH 391-98)).